The following is a 174-amino-acid chain: N-terminal acetyltransferase B complex catalytic subunit NAA20 (174 aa).

In terms of domain architecture, N-acetyltransferase spans 2–151; it reads TTIRRFSCND…DGLDMRKALS (150 aa).

This sequence belongs to the acetyltransferase family. ARD1 subfamily.

The catalysed reaction is N-terminal L-methionyl-L-asparaginyl-[protein] + acetyl-CoA = N-terminal N(alpha)-acetyl-L-methionyl-L-asparaginyl-[protein] + CoA + H(+). The enzyme catalyses N-terminal L-methionyl-L-glutaminyl-[protein] + acetyl-CoA = N-terminal N(alpha)-acetyl-L-methionyl-L-glutaminyl-[protein] + CoA + H(+). It carries out the reaction N-terminal L-methionyl-L-aspartyl-[protein] + acetyl-CoA = N-terminal N(alpha)-acetyl-L-methionyl-L-aspartyl-[protein] + CoA + H(+). It catalyses the reaction N-terminal L-methionyl-L-glutamyl-[protein] + acetyl-CoA = N-terminal N(alpha)-acetyl-L-methionyl-L-glutamyl-[protein] + CoA + H(+). Its function is as follows. Catalytic subunit of the NatB N-alpha-acetyltransferase complex. Involved in plant immunity through the regulation of SNC1 stability. The polypeptide is N-terminal acetyltransferase B complex catalytic subunit NAA20 (Arabidopsis thaliana (Mouse-ear cress)).